Here is a 414-residue protein sequence, read N- to C-terminus: 2,3-diketo-5-methylthiopentyl-1-phosphate enolase (414 aa).

Lys-99 acts as the Proton acceptor in catalysis. Residues Lys-148, 174-177 (KDDE), His-265, Gly-338, and 360-361 (GG) each bind substrate. Residues Lys-174, Asp-176, and Glu-177 each contribute to the Mg(2+) site. The residue at position 174 (Lys-174) is an N6-carboxylysine.

It belongs to the RuBisCO large chain family. Type IV subfamily. In terms of assembly, homodimer. Requires Mg(2+) as cofactor.

It catalyses the reaction 5-methylsulfanyl-2,3-dioxopentyl phosphate = 2-hydroxy-5-methylsulfanyl-3-oxopent-1-enyl phosphate. Its pathway is amino-acid biosynthesis; L-methionine biosynthesis via salvage pathway; L-methionine from S-methyl-5-thio-alpha-D-ribose 1-phosphate: step 3/6. Catalyzes the enolization of 2,3-diketo-5-methylthiopentyl-1-phosphate (DK-MTP-1-P) into 2-hydroxy-3-keto-5-methylthiopentenyl-1-phosphate (HK-MTPenyl-1-P). This chain is 2,3-diketo-5-methylthiopentyl-1-phosphate enolase, found in Bacillus cereus (strain ZK / E33L).